The chain runs to 346 residues: N(4)-(beta-N-acetylglucosaminyl)-L-asparaginase (346 aa).

A signal peptide spans 1 to 23 (MARKSNLPVLLVPFLLCQALVRC). Ser24 carries the blocked amino end (Ser) modification. Residue Asn38 is glycosylated (N-linked (GlcNAc...) asparagine). Intrachain disulfides connect Cys64-Cys69 and Cys163-Cys179. Catalysis depends on Thr206, which acts as the Nucleophile. Substrate is bound by residues 234–237 (RVGD) and 257–260 (TGNG). Cys286 and Cys306 are oxidised to a cystine. N-linked (GlcNAc...) asparagine glycosylation is present at Asn308. Cys317 and Cys345 are joined by a disulfide.

It belongs to the Ntn-hydrolase family. Heterotetramer of two alpha and two beta chains arranged as a dimer of alpha/beta heterodimers. Cleaved into an alpha and beta chain by autocatalysis; this activates the enzyme. The N-terminal residue of the beta subunit is responsible for the nucleophile hydrolase activity. In terms of processing, N-glycosylated.

It is found in the lysosome. It carries out the reaction N(4)-(beta-N-acetyl-D-glucosaminyl)-L-asparagine + H2O = N-acetyl-beta-D-glucosaminylamine + L-aspartate + H(+). Functionally, cleaves the GlcNAc-Asn bond which joins oligosaccharides to the peptide of asparagine-linked glycoproteins. The chain is N(4)-(beta-N-acetylglucosaminyl)-L-asparaginase (AGA) from Homo sapiens (Human).